Reading from the N-terminus, the 450-residue chain is MAKHDRGLRFQPAGGSRAPQIPVGKKQRLTIQRLANDGRGIAFVEGRTWFVSGALAGEEVEARVLGSHGKVVEARAERIFNASDLRRPAACAHAGRCGGCSVQHLPHDEQLALKQRMLAEQLSKVAGVEPEAWAAPLSGPEFGYRRRARVAVRWDAKGKQLEVGFRAAGSQDIVAIDDCPVLVQALQPVMNRLPAMLRRLSKPQALGHVELFSGSALAVLLRHMAPLSDSDLTILKDFCDFHQAQLWLHGEGEPQPFDPSQALGYRLETWDLHLAYRPGDFVQVNAGVNEAMVAQALEWLAPQADERVLDLFCGLGNFALPLARQVREVVAVEGVATMVARAAENAASNNLHNTRFFQADLSQPLSAAEWADEGFSAVLLDPPRDGAFEVVRQLATLGAKRLVYVSCNPATLARDTVELIKQGYRLKRAGILDMFPQTAHVEAMALFEAS.

Positions 1–22 are disordered; the sequence is MAKHDRGLRFQPAGGSRAPQIP. In terms of domain architecture, TRAM spans 20–78; it reads QIPVGKKQRLTIQRLANDGRGIAFVEGRTWFVSGALAGEEVEARVLGSHGKVVEARAER. Residues cysteine 91, cysteine 97, cysteine 100, and cysteine 179 each coordinate [4Fe-4S] cluster. Glutamine 283, phenylalanine 312, asparagine 317, glutamate 333, aspartate 360, and aspartate 381 together coordinate S-adenosyl-L-methionine. Catalysis depends on cysteine 407, which acts as the Nucleophile.

The protein belongs to the class I-like SAM-binding methyltransferase superfamily. RNA M5U methyltransferase family. RlmD subfamily.

It catalyses the reaction uridine(1939) in 23S rRNA + S-adenosyl-L-methionine = 5-methyluridine(1939) in 23S rRNA + S-adenosyl-L-homocysteine + H(+). In terms of biological role, catalyzes the formation of 5-methyl-uridine at position 1939 (m5U1939) in 23S rRNA. The polypeptide is 23S rRNA (uracil(1939)-C(5))-methyltransferase RlmD (Pseudomonas fluorescens (strain ATCC BAA-477 / NRRL B-23932 / Pf-5)).